Reading from the N-terminus, the 214-residue chain is Large ribosomal subunit protein uL3 (214 aa).

The interval 129–155 is disordered; that stretch reads FGRGPMSHGSKNHRRPGSVGAGTTPGR.

This sequence belongs to the universal ribosomal protein uL3 family. In terms of assembly, part of the 50S ribosomal subunit. Forms a cluster with proteins L14 and L19.

Its function is as follows. One of the primary rRNA binding proteins, it binds directly near the 3'-end of the 23S rRNA, where it nucleates assembly of the 50S subunit. In Synechococcus sp. (strain JA-3-3Ab) (Cyanobacteria bacterium Yellowstone A-Prime), this protein is Large ribosomal subunit protein uL3.